The following is a 482-amino-acid chain: Capsule synthesis positive regulator AcpB (482 aa).

2 PRD domains span residues 165 to 270 (PFEK…YKDI) and 283 to 395 (EGNL…YTSN).

It belongs to the AtxA/AcpA family.

Its function is as follows. AcpB and AcpA regulate cap gene expression and capsule synthesis. The sequence is that of Capsule synthesis positive regulator AcpB (acpB) from Bacillus anthracis.